The chain runs to 216 residues: 3-isopropylmalate dehydratase small subunit (216 aa).

The protein belongs to the LeuD family. LeuD type 1 subfamily. In terms of assembly, heterodimer of LeuC and LeuD.

It catalyses the reaction (2R,3S)-3-isopropylmalate = (2S)-2-isopropylmalate. The protein operates within amino-acid biosynthesis; L-leucine biosynthesis; L-leucine from 3-methyl-2-oxobutanoate: step 2/4. Functionally, catalyzes the isomerization between 2-isopropylmalate and 3-isopropylmalate, via the formation of 2-isopropylmaleate. The polypeptide is 3-isopropylmalate dehydratase small subunit (Polaromonas naphthalenivorans (strain CJ2)).